The following is a 193-amino-acid chain: Recombination protein RecR (193 aa).

The C4-type zinc finger occupies 61–76 (CSSCNALSESEVCEIC). A Toprim domain is found at 84–170 (SQLCMVLHPR…TFTKIAQGVP (87 aa)).

The protein belongs to the RecR family.

In terms of biological role, may play a role in DNA repair. It seems to be involved in an RecBC-independent recombinational process of DNA repair. It may act with RecF and RecO. This chain is Recombination protein RecR, found in Helicobacter pylori (strain P12).